Consider the following 618-residue polypeptide: MKQSKLLIPTLREMPSDAQVISHALMVRAGYVRQVSAGIYAYLPLANRTIEKFKTIMREEFEKIGAVEMLAPALLTADLWRESGRYETYGEDLYKLKNRDNSDFILGPTHEETFTTLVRDAVKSYKQLPLNLYQIQSKYRDEKRPRNGLLRTREFIMKDGYSFHHNYEDLDVTYEDYRQAYEAIFTRAGLDFKGIIGDGGAMGGKDSQEFMAITPARTDLDRWVVLDKSIASMDAIPKEVLEEIKAELAAWMISGEDTIAYSTESSYAANLEMATNEYKPSSKVAAEDALAEVETPHCKTIDEVAAFLSVDETQTIKTLLFVADNEPVVALLVGNDHINTVKLKNYLAADFLEPASEEEARAFFGAGFGSLGPVNLAQGSRIVADRKVQNLTNAVAGANKDGFHVTGVNPGRDFQAEYVDIREVKEGEISPDGHGVLQFARGIEVGHIFKLGTRYSDSMGATILDENSRAVPIVMGCYGIGVSRILSAVIEQHARLFVNKTPKGDYRYAWGINFPKELAPFDVHLITVNVKDQVAQDLTAKLEADLMAKGYDVLTDDRNERVGSKFSDSDLIGLPIRVTVGKKAAEGIVEIKIKATGDSIEVNAENLIETLEILTKEH.

This sequence belongs to the class-II aminoacyl-tRNA synthetase family. ProS type 1 subfamily. Homodimer.

Its subcellular location is the cytoplasm. It carries out the reaction tRNA(Pro) + L-proline + ATP = L-prolyl-tRNA(Pro) + AMP + diphosphate. In terms of biological role, catalyzes the attachment of proline to tRNA(Pro) in a two-step reaction: proline is first activated by ATP to form Pro-AMP and then transferred to the acceptor end of tRNA(Pro). As ProRS can inadvertently accommodate and process non-cognate amino acids such as alanine and cysteine, to avoid such errors it has two additional distinct editing activities against alanine. One activity is designated as 'pretransfer' editing and involves the tRNA(Pro)-independent hydrolysis of activated Ala-AMP. The other activity is designated 'posttransfer' editing and involves deacylation of mischarged Ala-tRNA(Pro). The misacylated Cys-tRNA(Pro) is not edited by ProRS. The protein is Proline--tRNA ligase of Streptococcus pyogenes serotype M2 (strain MGAS10270).